We begin with the raw amino-acid sequence, 457 residues long: Bifunctional protein GlmU (457 aa).

A pyrophosphorylase region spans residues 1–236; sequence MDQDACTHSA…DWHFLGVNTP (236 aa). UDP-N-acetyl-alpha-D-glucosamine is bound by residues 14-17, Lys28, Gln79, and 84-85; these read LAAG and GT. Mg(2+) is bound at residue Asp110. Positions 145, 159, 176, and 234 each coordinate UDP-N-acetyl-alpha-D-glucosamine. A Mg(2+)-binding site is contributed by Asn234. The tract at residues 237-257 is linker; it reads KDLSYVESIQQAFIIEKLLQS. The segment at 258-457 is N-acetyltransferase; sequence GVIIHSPESV…GKQKNFSKRK (200 aa). Residues Arg340 and Lys358 each contribute to the UDP-N-acetyl-alpha-D-glucosamine site. His370 serves as the catalytic Proton acceptor. Positions 373 and 384 each coordinate UDP-N-acetyl-alpha-D-glucosamine. Acetyl-CoA is bound by residues Ala387, 393-394, Ser412, Ala430, and Arg447; that span reads NY.

This sequence in the N-terminal section; belongs to the N-acetylglucosamine-1-phosphate uridyltransferase family. It in the C-terminal section; belongs to the transferase hexapeptide repeat family. As to quaternary structure, homotrimer. Mg(2+) is required as a cofactor.

It is found in the cytoplasm. The catalysed reaction is alpha-D-glucosamine 1-phosphate + acetyl-CoA = N-acetyl-alpha-D-glucosamine 1-phosphate + CoA + H(+). The enzyme catalyses N-acetyl-alpha-D-glucosamine 1-phosphate + UTP + H(+) = UDP-N-acetyl-alpha-D-glucosamine + diphosphate. It functions in the pathway nucleotide-sugar biosynthesis; UDP-N-acetyl-alpha-D-glucosamine biosynthesis; N-acetyl-alpha-D-glucosamine 1-phosphate from alpha-D-glucosamine 6-phosphate (route II): step 2/2. The protein operates within nucleotide-sugar biosynthesis; UDP-N-acetyl-alpha-D-glucosamine biosynthesis; UDP-N-acetyl-alpha-D-glucosamine from N-acetyl-alpha-D-glucosamine 1-phosphate: step 1/1. It participates in bacterial outer membrane biogenesis; LPS lipid A biosynthesis. Functionally, catalyzes the last two sequential reactions in the de novo biosynthetic pathway for UDP-N-acetylglucosamine (UDP-GlcNAc). The C-terminal domain catalyzes the transfer of acetyl group from acetyl coenzyme A to glucosamine-1-phosphate (GlcN-1-P) to produce N-acetylglucosamine-1-phosphate (GlcNAc-1-P), which is converted into UDP-GlcNAc by the transfer of uridine 5-monophosphate (from uridine 5-triphosphate), a reaction catalyzed by the N-terminal domain. In Lawsonia intracellularis (strain PHE/MN1-00), this protein is Bifunctional protein GlmU.